The chain runs to 321 residues: DNA packaging protein (321 aa).

Residues methionine 1–glutamine 196 are ATPase. Glycine 13 to serine 20 is a binding site for ATP. A DNA-binding region spans residues lysine 222–glutamine 321.

Belongs to the phi29likevirus gp16 family. As to quaternary structure, homopentamer. Interacts with the packaging RNA (pRNA). Part of a DNA-gp3-gp16 complex.

It carries out the reaction ATP + H2O = ADP + phosphate + H(+). Its function is as follows. ATPase required for the genome encapsidation reaction. Part of the active packaging motor via the binding to the packaging RNA (pRNA), itself fixed to the head-tail connector at the unique portal vertex of the prohead. Binds and supercoils the pre-formed, unit-length DNA bound to gp3 to produce an initiation complex for DNA packaging. Provides the energy to actively pump the viral DNA into the prohead. Approximately one molecule of ATP is used in the packaging of 2 bp of viral DNA. ATP hydrolysis results in a conformational change that causes the arginine/lysine finger of one subunit to move into the active site of its neighbor, where it interacts with the negatively charged oxygens on the gamma-phosphate of ATP. After packaging, the ATPase and the pRNA are released from the prohead. The chain is DNA packaging protein (16) from Bacillus subtilis (Bacteriophage B103).